An 871-amino-acid chain; its full sequence is Chaperone protein ClpB 1 (871 aa).

The Clp R domain occupies 6–147 (PNQFTEKAWA…REAIQQIRGS (142 aa)). 2 repeat regions span residues 9 to 73 (FTEK…ISRQ) and 84 to 147 (LGQS…IRGS). The segment at 160–341 (AALEKYGRDL…RRFQQVYVDQ (182 aa)) is NBD1. Position 207–214 (207–214 (GEPGVGKT)) interacts with ATP. The linker stretch occupies residues 342–550 (PSVEDTISIL…IAEIISKWTG (209 aa)). Residues 392–526 (IDLVDEAAAK…AEAKLREIQV (135 aa)) are a coiled coil. The NBD2 stretch occupies residues 560–771 (EAQKLLHLEE…RVDEFIIFHS (212 aa)). 610–617 (GPTGVGKT) is a binding site for ATP. A C-terminal region spans residues 772 to 871 (LRKDQLRQIV…FRRQVELATV (100 aa)).

The protein belongs to the ClpA/ClpB family. In terms of assembly, homohexamer. The oligomerization is ATP-dependent.

The protein localises to the cytoplasm. In terms of biological role, part of a stress-induced multi-chaperone system, it is involved in the recovery of the cell from heat-induced damage, in cooperation with DnaK, DnaJ and GrpE. Acts before DnaK, in the processing of protein aggregates. Protein binding stimulates the ATPase activity; ATP hydrolysis unfolds the denatured protein aggregates, which probably helps expose new hydrophobic binding sites on the surface of ClpB-bound aggregates, contributing to the solubilization and refolding of denatured protein aggregates by DnaK. The sequence is that of Chaperone protein ClpB 1 (clpB1) from Thermosynechococcus vestitus (strain NIES-2133 / IAM M-273 / BP-1).